Here is a 430-residue protein sequence, read N- to C-terminus: Isocitrate dehydrogenase [NADP], mitochondrial (430 aa).

The transit peptide at 1 to 27 directs the protein to the mitochondrion; that stretch reads MIRASAIQRTAMLLRQLRGFSTSATLA. Residues 101–103 and Arg108 contribute to the NADP(+) site; that span reads TIT. Thr103 is a binding site for substrate. Residues 120–126, Arg135, and Arg158 each bind substrate; that span reads SPNGTIR. Mn(2+) is bound at residue Asp277. Position 285 (Lys285) interacts with NADP(+). Asp300 is a Mn(2+) binding site. NADP(+) is bound by residues 335-340 and Asn353; that span reads GTVTRH.

This sequence belongs to the isocitrate and isopropylmalate dehydrogenases family. In terms of assembly, homodimer. Requires Mg(2+) as cofactor. Mn(2+) is required as a cofactor.

It is found in the mitochondrion. The enzyme catalyses D-threo-isocitrate + NADP(+) = 2-oxoglutarate + CO2 + NADPH. In terms of biological role, mitochondrial IDP1 may regulate flux through the tricarboxylic acid cycle and respiration. Its probably critical function is the production of NADPH. The chain is Isocitrate dehydrogenase [NADP], mitochondrial (IDP1) from Candida tropicalis (Yeast).